A 209-amino-acid polypeptide reads, in one-letter code: MDGVTVIDHPLVQHKLTIMRRKETSTGSFRRLLREISTLLCYEVTRDLELTMETIETPLQTIESPILEGKKLVFASILRAGNGLLEGMLDLVPSARVSHIGVYRDHETLQPVEYYFKAPEDVAERLIIVVDPMLATGNSSIAAIDKLKERGAHNIRFLCLLAAPEGIRNFRAAHPDVPVFTAAIDSHLNEKGYIVPGLGDAGDRMYGTK.

5-phospho-alpha-D-ribose 1-diphosphate is bound by residues Arg79, Arg104, and 131–139; that span reads DPMLATGNS. Uracil is bound by residues Ile194 and 199–201; that span reads GDA. Asp200 contacts 5-phospho-alpha-D-ribose 1-diphosphate.

It belongs to the UPRTase family. Mg(2+) serves as cofactor.

The enzyme catalyses UMP + diphosphate = 5-phospho-alpha-D-ribose 1-diphosphate + uracil. The protein operates within pyrimidine metabolism; UMP biosynthesis via salvage pathway; UMP from uracil: step 1/1. Its activity is regulated as follows. Allosterically activated by GTP. Functionally, catalyzes the conversion of uracil and 5-phospho-alpha-D-ribose 1-diphosphate (PRPP) to UMP and diphosphate. This Rhizobium etli (strain CIAT 652) protein is Uracil phosphoribosyltransferase.